The following is a 278-amino-acid chain: Large ribosomal subunit protein uL2 (278 aa).

Disordered regions lie at residues 1–58 (MAIR…GGGH) and 224–278 (VVMN…GKKR). Positions 23–33 (EITRDHPEKSL) are enriched in basic and acidic residues. A compositionally biased stretch (basic residues) spans 37-58 (LHGRGGRNAHGRITTRHKGGGH). Residues 253 to 268 (PEGRTRKPKKASDKLI) are compositionally biased toward basic and acidic residues. Basic residues predominate over residues 269–278 (VRRRRTGKKR).

The protein belongs to the universal ribosomal protein uL2 family. In terms of assembly, part of the 50S ribosomal subunit. Forms a bridge to the 30S subunit in the 70S ribosome.

Functionally, one of the primary rRNA binding proteins. Required for association of the 30S and 50S subunits to form the 70S ribosome, for tRNA binding and peptide bond formation. It has been suggested to have peptidyltransferase activity; this is somewhat controversial. Makes several contacts with the 16S rRNA in the 70S ribosome. The polypeptide is Large ribosomal subunit protein uL2 (Mycolicibacterium vanbaalenii (strain DSM 7251 / JCM 13017 / BCRC 16820 / KCTC 9966 / NRRL B-24157 / PYR-1) (Mycobacterium vanbaalenii)).